The primary structure comprises 1615 residues: DNA-directed RNA polymerase I subunit rpa1 (1615 aa).

4 residues coordinate Zn(2+): Cys65, Cys68, Cys75, and His78. Residues 155-181 form a disordered region; sequence GKSNEEGEEVMESDESDSDKMDTDENK. Positions 160–171 are enriched in acidic residues; that stretch reads EGEEVMESDESD. Residues 172 to 181 are compositionally biased toward basic and acidic residues; that stretch reads SDKMDTDENK. The Mg(2+) site is built by Asp593, Asp595, and Asp597. The interval 955–967 is bridging helix; that stretch reads PQDYFFHCMAGRE. Residues 1305–1316 show a composition bias toward acidic residues; it reads DSLTINDDDAPA. The disordered stretch occupies residues 1305-1411; that stretch reads DSLTINDDDA…NSRSSNSFSD (107 aa). A compositionally biased stretch (low complexity) spans 1317–1336; it reads NDDTTNNDENTSQQQPSSQN. The span at 1366 to 1399 shows a compositional bias: acidic residues; that stretch reads EDGEEEAEEKDSDEGESEAEESDDKSDVDSDSDE. Over residues 1400–1411 the composition is skewed to low complexity; sequence ISNSRSSNSFSD.

It belongs to the RNA polymerase beta' chain family. As to quaternary structure, component of the RNA polymerase I (Pol I) complex consisting of at least 13 subunits.

The protein localises to the nucleus. The catalysed reaction is RNA(n) + a ribonucleoside 5'-triphosphate = RNA(n+1) + diphosphate. In terms of biological role, DNA-dependent RNA polymerase catalyzes the transcription of DNA into RNA using the four ribonucleoside triphosphates as substrates. Largest and catalytic core component of RNA polymerase I which synthesizes ribosomal RNA precursors. Forms the polymerase active center together with the second largest subunit. A single stranded DNA template strand of the promoter is positioned within the central active site cleft of Pol I. A bridging helix emanates from RPA1 and crosses the cleft near the catalytic site and is thought to promote translocation of Pol I by acting as a ratchet that moves the RNA-DNA hybrid through the active site by switching from straight to bent conformations at each step of nucleotide addition. This chain is DNA-directed RNA polymerase I subunit rpa1 (polr1a), found in Dictyostelium discoideum (Social amoeba).